The following is a 392-amino-acid chain: O-phospho-L-seryl-tRNA:Cys-tRNA synthase 2 (392 aa).

Pyridoxal 5'-phosphate contacts are provided by residues 85–86, Asn-190, and 213–215; these read AR and SGH. N6-(pyridoxal phosphate)lysine is present on Lys-216.

It belongs to the SepCysS family. Homodimer. Interacts with SepRS. It depends on pyridoxal 5'-phosphate as a cofactor.

It catalyses the reaction O-phospho-L-seryl-tRNA(Cys) + hydrogen sulfide + H(+) = L-cysteinyl-tRNA(Cys) + phosphate. Functionally, converts O-phospho-L-seryl-tRNA(Cys) (Sep-tRNA(Cys)) to L-cysteinyl-tRNA(Cys) (Cys-tRNA(Cys)). The sequence is that of O-phospho-L-seryl-tRNA:Cys-tRNA synthase 2 from Methanocorpusculum labreanum (strain ATCC 43576 / DSM 4855 / Z).